Here is a 344-residue protein sequence, read N- to C-terminus: Gas vesicle ATPase GvpN2 (344 aa).

A disordered region spans residues 1-55 (MTDTSRNRKVRGSKIRSSRSDKRQSRGSEDKELKRLADARDTDSEQAGDRVGDAF). Over residues 7-17 (NRKVRGSKIRS) the composition is skewed to basic residues. Basic and acidic residues predominate over residues 18–52 (SRSDKRQSRGSEDKELKRLADARDTDSEQAGDRVG). 89–96 (GPTGCGKT) serves as a coordination point for ATP.

The protein belongs to the CbbQ/NirQ/NorQ/GpvN family. Forms homodimers, a GvpN-GvpO heterodimer, interacts with GvpC and GvpL, might interact with GvpA.

Its subcellular location is the gas vesicle. It localises to the cytoplasm. The enzyme catalyses ATP + H2O = ADP + phosphate + H(+). In terms of biological role, an ATPase that functions in gas vesicle formation. A minor component of the gas vesicle, also found in soluble extracts. Gas vesicles are hollow, gas filled proteinaceous nanostructures found in several microbial planktonic microorganisms. They allow positioning of halobacteria at the optimal depth for growth in the poorly aerated, shallow brine pools of their habitat. Expression of 2 c-vac DNA fragments containing 2 divergently transcribed regions (gvpE-gvpF-gvpG-gvpH-gvpI-gvpJ-gvpK-gvpL-gvpM and gvpA-gvpC-gvpN-gvpO) allows H.volcanii to produce gas vesicles. This is Gas vesicle ATPase GvpN2 from Halobacterium salinarum (strain ATCC 700922 / JCM 11081 / NRC-1) (Halobacterium halobium).